The primary structure comprises 8797 residues: Nesprin-1 (8797 aa).

Residues 1–289 (MATSRGASRC…KHYPDIHNAS (289 aa)) form an actin-binding region. At 1–8746 (MATSRGASRC…GRGFLFRVLR (8746 aa)) the chain is on the cytoplasmic side. 2 Calponin-homology (CH) domains span residues 27-134 (IVQK…LYFQ) and 178-283 (GNAK…KHYP). 52 Spectrin repeats span residues 314–397 (REDR…SRLF), 398–502 (DWHI…HLMK), 503–609 (MEFL…SMLE), 610–703 (EVIS…YAQA), 704–815 (DEMD…QLLI), 816–923 (PLEE…KHVE), 924–1024 (TNSR…HLKI), 1025–1122 (DVEK…LMED), 1123–1246 (PDKW…NSLE), 1247–1335 (ELIS…ERRI), 1336–1444 (QVTL…MEMV), 1445–1550 (KTKW…ILGH), 1551–1653 (LSQQ…LENL), 1654–1763 (LAHW…LQSV), 1764–1879 (VAEH…SHAS), 1880–1976 (LSGI…ADAL), 1977–2081 (AVLK…QGQC), 2082–2195 (CGLI…LRVS), 2196–2303 (LSIW…KDFT), 2304–2401 (AQST…KTQA), 2402–2513 (SLQE…LQDC), 2514–2619 (ASEL…LRSC), 2620–2731 (QVAL…LESV), 2732–2838 (ISQW…VEEI), 2839–2962 (VKDH…SGQV), 2963–3062 (AQLE…QNKE), 3063–3171 (QILQ…LENL), 3172–3275 (KIQM…VSRL), 3276–3387 (DRIV…LEGA), 3388–3490 (LSKW…SEKL), 3491–3593 (VRLH…RTQF), 3594–3720 (NNVV…YSDW), 3721–3814 (YGST…LEKG), 3815–3920 (LHLA…LEAK), 3921–4028 (VKDH…QRMY), 4029–4139 (QSLE…KHLK), 4140–4235 (SELW…REED), 4236–4339 (LQRT…IQVS), 4340–4451 (VTNL…LNKA), 4452–4560 (LSEK…LEKN), 4561–4669 (LVSR…VQEA), 4670–4776 (ILAR…LEDT), 4777–4882 (TSAY…CESR), 4883–4991 (MVQS…LTEI), 4992–5099 (YSQC…LQRC), 5100–5209 (TAQW…LEDA), 5210–5318 (VDEW…GKLV), 5319–5424 (KQEL…EQSK), 5425–5522 (ATSQ…LSKL), 5523–5630 (NQAA…LQDA), 5631–5736 (AKDM…MQEA), and 5737–5842 (VVQY…PSAH). Residues 314-8666 (REDRVIFKEM…EKLLDVSSSQ (8353 aa)) are a coiled coil. Serine 732 bears the Phosphoserine mark. Threonine 2270 is modified (phosphothreonine). Serine 5657 bears the Phosphoserine mark. The segment at 5859 to 5886 (PVTEESGEEGTNSEISSPPACRSPSPVA) is disordered. Spectrin repeat units lie at residues 5962–6071 (LERQ…LEEK), 6072–6178 (LNDQ…SLLE), 6374–6485 (RQSI…RLQQ), 6486–6581 (ILNF…RSGL), 6582–6691 (NQNL…LETW), 6692–6795 (SHLD…TILK), 6796–6902 (HWTR…QEKL), 6903–7020 (HQLQ…LEGL), 7021–7128 (LESW…LKSV), 7129–7237 (LDQW…SKAL), 7238–7350 (LQLW…LQAG), 7351–7454 (VLDY…LQSF), 7455–7558 (LLQH…RGII), 7559–7671 (DSQI…LAFL), 7672–7783 (LKDW…NEWA), 7784–7883 (VFSE…LKET), 7884–7997 (LVAV…IEET), 7998–8106 (WRLW…LKHF), and 8107–8216 (IGQR…LPLP). A Phosphoserine modification is found at serine 8223. The disordered stretch occupies residues 8246-8279 (DSLLSPQPSSNLSLSLAQPLRSERSGRDTPASVD). The segment covering 8247–8265 (SLLSPQPSSNLSLSLAQPL) has biased composition (low complexity). At threonine 8274 the chain carries Phosphothreonine. A phosphoserine mark is found at serine 8277, serine 8280, and serine 8305. Spectrin repeat units follow at residues 8329-8438 (SALE…MKQN), 8439-8548 (LQKW…LQDA), and 8549-8666 (LMQC…SSSQ). Residue threonine 8360 is modified to Phosphothreonine. The disordered stretch occupies residues 8671-8734 (SWSSADELDT…DSSLSEPGPG (64 aa)). Composition is skewed to polar residues over residues 8680–8696 (TSGS…PNRQ) and 8704–8729 (SLSQ…SSLS). One can recognise a KASH domain in the interval 8738–8797 (RGFLFRVLRAALPLQLLLLLLIGLACLVPMSEEDYSCALSNNFARSFHPMLRYTNGPPPL). A helical; Anchor for type IV membrane protein transmembrane segment spans residues 8747–8767 (AALPLQLLLLLLIGLACLVPM). Residues 8768 to 8797 (SEEDYSCALSNNFARSFHPMLRYTNGPPPL) lie on the Perinuclear space side of the membrane.

This sequence belongs to the nesprin family. Core component of LINC complexes which are composed of inner nuclear membrane SUN domain-containing proteins coupled to outer nuclear membrane KASH domain-containing nesprins. SUN and KASH domain-containing proteins seem to bind each other promiscuously; however, differentially expression of LINC complex constituents can give rise to specific assemblies. At least SUN1/2-containing core LINC complexes are proposed to be hexameric composed of three protomers of each KASH and SUN domain-containing protein. The SUN2:SYNE1/KASH1 LINC complex is a heterohexamer; the homotrimeric cloverleave-like conformation of the SUN domain is a prerequisite for LINC complex formation in which three separate SYNE1/KASH1 peptides bind at the interface of adjacent SUN domains. Self-associates. Interacts with SYNE3. Interacts with SPAG4/SUN4. May interact with MUSK. Interacts with F-actin via its N-terminal domain. Interacts with EMD and LMNA in vitro. Interacts (via KASH domain) with TMEM258. The disulfid bond with SUN1 or SUN2 is required for stability of the respective LINC complex under tensile forces. In terms of tissue distribution, expressed in HeLa, A431, A172 and HaCaT cells (at protein level). Widely expressed. Highly expressed in skeletal and smooth muscles, heart, spleen, peripheral blood leukocytes, pancreas, cerebellum, stomach, kidney and placenta. Isoform GSRP-56 is predominantly expressed in heart and skeletal muscle (at protein level).

Its subcellular location is the nucleus outer membrane. The protein localises to the nucleus. It localises to the nucleus envelope. The protein resides in the cytoplasm. It is found in the cytoskeleton. Its subcellular location is the myofibril. The protein localises to the sarcomere. It localises to the golgi apparatus. In terms of biological role, multi-isomeric modular protein which forms a linking network between organelles and the actin cytoskeleton to maintain the subcellular spatial organization. As a component of the LINC (LInker of Nucleoskeleton and Cytoskeleton) complex involved in the connection between the nuclear lamina and the cytoskeleton. The nucleocytoplasmic interactions established by the LINC complex play an important role in the transmission of mechanical forces across the nuclear envelope and in nuclear movement and positioning. May be involved in nucleus-centrosome attachment and nuclear migration in neural progenitors implicating LINC complex association with SUN1/2 and probably association with cytoplasmic dynein-dynactin motor complexes; SYNE1 and SYNE2 may act redundantly. Required for centrosome migration to the apical cell surface during early ciliogenesis. May be involved in nuclear remodeling during sperm head formation in spermatogenesis; a probable SUN3:SYNE1/KASH1 LINC complex may tether spermatid nuclei to posterior cytoskeletal structures such as the manchette. In Homo sapiens (Human), this protein is Nesprin-1.